A 159-amino-acid chain; its full sequence is MKLLSKIMIIALAASMLQACNGQSGMNKQGTGTLLGGAGGALLGSQFGQGKGQLVGVGVGALLGAVLGGQIGASMDEQDRRLLELTSQRALESAPSGSNIEWRNPDNGNHGYVTPNKTYRNSAGQYCREYTQTVIIGGKQQKTYGNACRQPDGQWQVVN.

A signal peptide spans 1–19 (MKLLSKIMIIALAASMLQA). Cys20 carries N-palmitoyl cysteine lipidation. Residue Cys20 is the site of S-diacylglycerol cysteine attachment.

Belongs to the rickettsiale 17 kDa surface antigen family.

It is found in the cell outer membrane. This is 17 kDa surface antigen (omp) from Rickettsia prowazekii (strain Madrid E).